We begin with the raw amino-acid sequence, 336 residues long: 3-isopropylmalate dehydrogenase (336 aa).

Substrate-binding residues include Arg87, Arg97, Arg121, and Asp211. 3 residues coordinate Mg(2+): Asp211, Asp235, and Asp239. 271–283 (GSAPDIAGQGIAD) provides a ligand contact to NAD(+).

The protein belongs to the isocitrate and isopropylmalate dehydrogenases family. LeuB type 2 subfamily. Homodimer. Mg(2+) is required as a cofactor. Mn(2+) serves as cofactor.

It is found in the cytoplasm. It catalyses the reaction (2R,3S)-3-isopropylmalate + NAD(+) = 4-methyl-2-oxopentanoate + CO2 + NADH. Its pathway is amino-acid biosynthesis; L-leucine biosynthesis; L-leucine from 3-methyl-2-oxobutanoate: step 3/4. Functionally, catalyzes the oxidation of 3-carboxy-2-hydroxy-4-methylpentanoate (3-isopropylmalate) to 3-carboxy-4-methyl-2-oxopentanoate. The product decarboxylates to 4-methyl-2 oxopentanoate. The polypeptide is 3-isopropylmalate dehydrogenase (Mycobacterium bovis (strain ATCC BAA-935 / AF2122/97)).